The primary structure comprises 278 residues: 3-methyl-2-oxobutanoate hydroxymethyltransferase (278 aa).

Mg(2+)-binding residues include Asp-43 and Asp-82. Residues 43 to 44, Asp-82, and Lys-112 each bind 3-methyl-2-oxobutanoate; that span reads DS. Mg(2+) is bound at residue Glu-114. Catalysis depends on Glu-181, which acts as the Proton acceptor.

This sequence belongs to the PanB family. As to quaternary structure, homodecamer; pentamer of dimers. The cofactor is Mg(2+).

The protein localises to the cytoplasm. It catalyses the reaction 3-methyl-2-oxobutanoate + (6R)-5,10-methylene-5,6,7,8-tetrahydrofolate + H2O = 2-dehydropantoate + (6S)-5,6,7,8-tetrahydrofolate. It functions in the pathway cofactor biosynthesis; (R)-pantothenate biosynthesis; (R)-pantoate from 3-methyl-2-oxobutanoate: step 1/2. Its function is as follows. Catalyzes the reversible reaction in which hydroxymethyl group from 5,10-methylenetetrahydrofolate is transferred onto alpha-ketoisovalerate to form ketopantoate. This Desulfitobacterium hafniense (strain DSM 10664 / DCB-2) protein is 3-methyl-2-oxobutanoate hydroxymethyltransferase.